The chain runs to 393 residues: S-adenosylmethionine synthase (393 aa).

H16 is a binding site for ATP. Position 18 (D18) interacts with Mg(2+). Position 44 (E44) interacts with K(+). L-methionine-binding residues include E57 and Q100. The interval Q100 to Q110 is flexible loop. ATP-binding positions include D167 to K169, R238 to F239, D247, R253 to K254, A270, and K274. D247 contributes to the L-methionine binding site. Residue K278 participates in L-methionine binding.

This sequence belongs to the AdoMet synthase family. In terms of assembly, homotetramer; dimer of dimers. Requires Mg(2+) as cofactor. The cofactor is K(+).

The protein localises to the cytoplasm. The enzyme catalyses L-methionine + ATP + H2O = S-adenosyl-L-methionine + phosphate + diphosphate. It participates in amino-acid biosynthesis; S-adenosyl-L-methionine biosynthesis; S-adenosyl-L-methionine from L-methionine: step 1/1. Functionally, catalyzes the formation of S-adenosylmethionine (AdoMet) from methionine and ATP. The overall synthetic reaction is composed of two sequential steps, AdoMet formation and the subsequent tripolyphosphate hydrolysis which occurs prior to release of AdoMet from the enzyme. The chain is S-adenosylmethionine synthase from Methylibium petroleiphilum (strain ATCC BAA-1232 / LMG 22953 / PM1).